A 64-amino-acid chain; its full sequence is Cytochrome c oxidase subunit 2 (64 aa).

Residues 1–14 (MAHPSQLGFQDAAS) lie on the Mitochondrial intermembrane side of the membrane. The chain crosses the membrane as a helical span at residues 15 to 45 (PVMEELXHFHDHTLMIVFLISTLVXYIIVAM). Over 46-64 (VSTKLTNKYVLDSQEIEIV) the chain is Mitochondrial matrix.

It belongs to the cytochrome c oxidase subunit 2 family. In terms of assembly, component of the cytochrome c oxidase (complex IV, CIV), a multisubunit enzyme composed of 14 subunits. The complex is composed of a catalytic core of 3 subunits MT-CO1, MT-CO2 and MT-CO3, encoded in the mitochondrial DNA, and 11 supernumerary subunits COX4I, COX5A, COX5B, COX6A, COX6B, COX6C, COX7A, COX7B, COX7C, COX8 and NDUFA4, which are encoded in the nuclear genome. The complex exists as a monomer or a dimer and forms supercomplexes (SCs) in the inner mitochondrial membrane with NADH-ubiquinone oxidoreductase (complex I, CI) and ubiquinol-cytochrome c oxidoreductase (cytochrome b-c1 complex, complex III, CIII), resulting in different assemblies (supercomplex SCI(1)III(2)IV(1) and megacomplex MCI(2)III(2)IV(2)). Found in a complex with TMEM177, COA6, COX18, COX20, SCO1 and SCO2. Interacts with TMEM177 in a COX20-dependent manner. Interacts with COX20. Interacts with COX16. The cofactor is Cu cation.

The protein localises to the mitochondrion inner membrane. The catalysed reaction is 4 Fe(II)-[cytochrome c] + O2 + 8 H(+)(in) = 4 Fe(III)-[cytochrome c] + 2 H2O + 4 H(+)(out). Its function is as follows. Component of the cytochrome c oxidase, the last enzyme in the mitochondrial electron transport chain which drives oxidative phosphorylation. The respiratory chain contains 3 multisubunit complexes succinate dehydrogenase (complex II, CII), ubiquinol-cytochrome c oxidoreductase (cytochrome b-c1 complex, complex III, CIII) and cytochrome c oxidase (complex IV, CIV), that cooperate to transfer electrons derived from NADH and succinate to molecular oxygen, creating an electrochemical gradient over the inner membrane that drives transmembrane transport and the ATP synthase. Cytochrome c oxidase is the component of the respiratory chain that catalyzes the reduction of oxygen to water. Electrons originating from reduced cytochrome c in the intermembrane space (IMS) are transferred via the dinuclear copper A center (CU(A)) of subunit 2 and heme A of subunit 1 to the active site in subunit 1, a binuclear center (BNC) formed by heme A3 and copper B (CU(B)). The BNC reduces molecular oxygen to 2 water molecules using 4 electrons from cytochrome c in the IMS and 4 protons from the mitochondrial matrix. The polypeptide is Cytochrome c oxidase subunit 2 (mt-co2) (Scaphirhynchus platorynchus (Shovelnose sturgeon)).